We begin with the raw amino-acid sequence, 238 residues long: Ribonuclease 3 (238 aa).

An RNase III domain is found at 11–136 (RARLEAAIGY…LIAAIYLDGG (126 aa)). Glutamate 49 contributes to the Mg(2+) binding site. The active site involves aspartate 53. 2 residues coordinate Mg(2+): aspartate 122 and glutamate 125. Glutamate 125 is a catalytic residue. The DRBM domain maps to 161 to 230 (DAKTELQEWA…AMKLLEREGV (70 aa)).

Belongs to the ribonuclease III family. Homodimer. Mg(2+) is required as a cofactor.

The protein localises to the cytoplasm. It catalyses the reaction Endonucleolytic cleavage to 5'-phosphomonoester.. In terms of biological role, digests double-stranded RNA. Involved in the processing of primary rRNA transcript to yield the immediate precursors to the large and small rRNAs (23S and 16S). Processes some mRNAs, and tRNAs when they are encoded in the rRNA operon. Processes pre-crRNA and tracrRNA of type II CRISPR loci if present in the organism. This chain is Ribonuclease 3, found in Rhizobium meliloti (strain 1021) (Ensifer meliloti).